A 512-amino-acid polypeptide reads, in one-letter code: tRNA-2-methylthio-N(6)-dimethylallyladenosine synthase (512 aa).

The interval 1 to 20 (MLQQADGVSPDRSSCDTPAP) is disordered. An MTTase N-terminal domain is found at 21-137 (RTFEVRTYGC…LPTLLDRARH (117 aa)). The [4Fe-4S] cluster site is built by cysteine 30, cysteine 66, cysteine 100, cysteine 174, cysteine 178, and cysteine 181. One can recognise a Radical SAM core domain in the interval 160–397 (RESAYAAWVS…ELQERISWEE (238 aa)). Residues 399–469 (RAQIGREVEL…PHHLIADAGP (71 aa)) enclose the TRAM domain. The span at 470-486 (AEHRRTRAGDAHAEGRT) shows a compositional bias: basic and acidic residues. The tract at residues 470–512 (AEHRRTRAGDAHAEGRTPKTGVGLGMPGIGAPEPAPVTQGCAL) is disordered.

This sequence belongs to the methylthiotransferase family. MiaB subfamily. In terms of assembly, monomer. [4Fe-4S] cluster is required as a cofactor.

It is found in the cytoplasm. The catalysed reaction is N(6)-dimethylallyladenosine(37) in tRNA + (sulfur carrier)-SH + AH2 + 2 S-adenosyl-L-methionine = 2-methylsulfanyl-N(6)-dimethylallyladenosine(37) in tRNA + (sulfur carrier)-H + 5'-deoxyadenosine + L-methionine + A + S-adenosyl-L-homocysteine + 2 H(+). In terms of biological role, catalyzes the methylthiolation of N6-(dimethylallyl)adenosine (i(6)A), leading to the formation of 2-methylthio-N6-(dimethylallyl)adenosine (ms(2)i(6)A) at position 37 in tRNAs that read codons beginning with uridine. This Mycolicibacterium gilvum (strain PYR-GCK) (Mycobacterium gilvum (strain PYR-GCK)) protein is tRNA-2-methylthio-N(6)-dimethylallyladenosine synthase.